The sequence spans 227 residues: Cytidylate kinase (227 aa).

Position 12–20 (12–20 (GPSGAGKGT)) interacts with ATP.

It belongs to the cytidylate kinase family. Type 1 subfamily.

The protein resides in the cytoplasm. It catalyses the reaction CMP + ATP = CDP + ADP. It carries out the reaction dCMP + ATP = dCDP + ADP. The chain is Cytidylate kinase from Salmonella choleraesuis (strain SC-B67).